The primary structure comprises 2191 residues: FRAS1-related extracellular matrix protein 1 (2191 aa).

The first 29 residues, 1 to 29 (MHSPGCTGPKAQWFLLLQLLLLHLDRVSA), serve as a signal peptide directing secretion. Positions 205-207 (RGD) match the Cell attachment site motif. CSPG repeat units lie at residues 300–394 (VPRA…MELE), 419–506 (APRV…FRIF), and 527–621 (PPFL…FVLW). Residue N341 is glycosylated (N-linked (GlcNAc...) asparagine). Residues N566 and N628 are each glycosylated (N-linked (GlcNAc...) asparagine). CSPG repeat units follow at residues 648-779 (KEAP…VSVS), 801-892 (QVPE…LEVT), and 912-1007 (EPPI…LVVS). N-linked (GlcNAc...) asparagine glycosylation is present at N1039. 6 CSPG repeats span residues 1049-1151 (PPSI…VYAT), 1172-1273 (EAPD…IQLS), 1294-1391 (TPTL…FYLW), 1412-1504 (GDIV…FTIS), 1525-1614 (LPVL…FLAT), and 1650-1742 (HLHS…FQAM). N1180 carries an N-linked (GlcNAc...) asparagine glycan. N-linked (GlcNAc...) asparagine glycosylation occurs at N1584. Residues 1749–1848 (ATPQSLDLRW…DDEVFEVILN (100 aa)) enclose the Calx-beta domain. Positions 1874 to 1921 (HPSNSFNQSKHSTWGKGPWHPLPSGSSSLTTSGSPLLERPPPSFTSGD) are disordered. Residues 1875–1885 (PSNSFNQSKHS) are compositionally biased toward polar residues. Positions 1895-1910 (LPSGSSSLTTSGSPLL) are enriched in low complexity. The region spanning 2072 to 2186 (HSGYCHILVT…CSKGKAHNFV (115 aa)) is the C-type lectin domain. Cysteines 2163 and 2177 form a disulfide.

This sequence belongs to the FRAS1 family. As to quaternary structure, interacts with FREM2. As to expression, expressed in epidermis and hair follicles. Expressed in many developing epidermal appendages, including the whisker and sensory vibrissae, cranial and trunk hair follicles, meibomian glands, teeth, footpads, eyelash primordia and invaginating mammary glands. Limb expression localizes to sheets of dermal cells on the apical and basal surfaces of the digits but, unlike FRAS1, is excluded from the apical ectodermal ridge. Usually expressed at higher level in dermal cells underlying the differentiating epithelial components, especially underlying the epidermis of the head, limbs, and eyelids. Expression in the eyelid dermis is apparent as early as 13 dpc. Postnatal expression in the skin is limited to the dermal papillae. In the kidney, it is expressed from 12.5 dpc in the mesenchyme surrounding the branching ureteric tree, with a strong expression in the more proximal regions of these tubules rather than at the proliferating and branching ends of the ureteric buds. In hair follicle, it is selectively expressed in the vibrissal hair primordia during development. Preferentially expressed in the whisker pad epithelia of 12.5 dpc embryos, in both the epithelial and mesenchymal cells of developing hair follicles. In the early stages of hair follicle development (i.e. stages 0-1), it is expressed in both hair placodes and dermal condensations. In stage 2, it is detected in dermal condensations and adjacent epithelia, but not in the upper region of the hair follicles. Expressed at the tip of developing hair follicles in the later stages (i.e. stages 3-5).

The protein localises to the secreted. It is found in the extracellular space. It localises to the extracellular matrix. Its subcellular location is the basement membrane. Its function is as follows. Extracellular matrix protein that plays a role in epidermal differentiation and is required for epidermal adhesion during embryonic development. The protein is FRAS1-related extracellular matrix protein 1 (Frem1) of Mus musculus (Mouse).